A 479-amino-acid chain; its full sequence is MNFELETLDLNGAAKEKCDALIVLLATSFKPGKDNLSILVAQALKAGDLESQSGKALVLYRPTGLACARAVLANVGEGSANEVSKAVKAAVLAVKAGNVKKLVICFAALPQEAPLRAAVTAAAEASYVFTTTKSKPEGRVIQRVVVAVSNSSGFKPVFDRAVAAVTGIEFAKEWANRPANHATPALLAGAARSLAKLANIKCEVLGPKQVERLGMGAFMAVAQGSEEPLRFIVLRYDGAQKSAAPTVLLGKGITFDSGGISIKPAADMDEMKFDMSGAASVLGVFLALAQLKPAINVIGLIPSCENLLDGRSVKPGDVVTSMSGQTIEILNTDAEGRLVLCDALTYAERFKPRAVVDIATLTGACVIALGGVRSGLFSADDQLAAALVSAGESSLDLCWRLPLDDDYAEGLKTSFADVANVAGRAGGAITAAKFLQRFAGKFPWAHLDIAGTAWKSGTAKGATGRPVALLLEYLLTSAK.

Residues Lys251 and Asp256 each coordinate Mn(2+). Lys263 is an active-site residue. Residues Asp274, Asp333, and Glu335 each coordinate Mn(2+). The active site involves Arg337.

The protein belongs to the peptidase M17 family. The cofactor is Mn(2+).

It localises to the cytoplasm. The enzyme catalyses Release of an N-terminal amino acid, Xaa-|-Yaa-, in which Xaa is preferably Leu, but may be other amino acids including Pro although not Arg or Lys, and Yaa may be Pro. Amino acid amides and methyl esters are also readily hydrolyzed, but rates on arylamides are exceedingly low.. It carries out the reaction Release of an N-terminal amino acid, preferentially leucine, but not glutamic or aspartic acids.. Its function is as follows. Presumably involved in the processing and regular turnover of intracellular proteins. Catalyzes the removal of unsubstituted N-terminal amino acids from various peptides. This Albidiferax ferrireducens (strain ATCC BAA-621 / DSM 15236 / T118) (Rhodoferax ferrireducens) protein is Probable cytosol aminopeptidase.